The chain runs to 506 residues: Transforming growth factor beta-1-induced transcript 1 protein (506 aa).

Positions 3-15 (DLDALLADLQITT) match the LD motif 1 motif. Residues 15-62 (TPPRCPVLLTDSPEKPQPTETRPPPPPYDPKTAMSNKTSDHETFPVDK) form a disordered region. Positions 52-62 (TSDHETFPVDK) are enriched in basic and acidic residues. Short sequence motifs (LD motif) lie at residues 87 to 99 (ELDR…NATQ) and 139 to 150 (ELDRLMASLSDF). Disordered regions lie at residues 154-201 (NTVS…PTPK) and 221-244 (SDEV…ATSV). Over residues 168-177 (GSEEVSRPGD) the composition is skewed to basic and acidic residues. Positions 248–260 (DLDSMLVKLQSGL) match the LD motif 4 motif. LIM zinc-binding domains are found at residues 271-330 (GLCE…LYAP), 331-388 (RCAL…RLFG), 389-448 (AVCA…RRGS), and 449-506 (LCAG…RLYG).

The protein belongs to the paxillin family. Interacts with tcf3 and tcf7l2.

It is found in the cell junction. Its subcellular location is the focal adhesion. The protein resides in the nucleus matrix. The protein localises to the cytoplasm. It localises to the cytoskeleton. Functions as a molecular adapter coordinating multiple protein-protein interactions at the focal adhesion complex and in the nucleus. May regulate both Wnt and steroid signaling pathways and play a role in the processes of cell growth, proliferation, migration, differentiation and senescence. May have a zinc-dependent DNA-binding activity. The sequence is that of Transforming growth factor beta-1-induced transcript 1 protein (tgfb1i1) from Xenopus laevis (African clawed frog).